A 94-amino-acid polypeptide reads, in one-letter code: MITIKAEVRKDQGKGASRRLRSAGKFPAIVYGGSEAPVSIELDHDSVKNQEAKEGFYGTALILSIDGKEVQVKVQAVQRHVYKPKLTHIDFVRV.

It belongs to the bacterial ribosomal protein bL25 family. In terms of assembly, part of the 50S ribosomal subunit; part of the 5S rRNA/L5/L18/L25 subcomplex. Contacts the 5S rRNA. Binds to the 5S rRNA independently of L5 and L18.

This is one of the proteins that binds to the 5S RNA in the ribosome where it forms part of the central protuberance. This chain is Large ribosomal subunit protein bL25, found in Pectobacterium carotovorum subsp. carotovorum (strain PC1).